Reading from the N-terminus, the 417-residue chain is Sterile alpha motif domain-containing protein 14 (417 aa).

The tract at residues 37–306 (LLVKGRRHRP…QETKCSYPYH (270 aa)) is disordered. The segment covering 40 to 49 (KGRRHRPSRS) has biased composition (basic residues). A phosphoserine mark is found at serine 84 and serine 108. Residues 138 to 153 (SGSPPRSAPSSDSSPS) show a composition bias toward low complexity. The segment covering 159-173 (PRAEPHSEDDSRDAS) has biased composition (basic and acidic residues). 2 positions are modified to phosphoserine: serine 173 and serine 179. Composition is skewed to low complexity over residues 244–260 (SGKG…PTCS) and 276–289 (STLS…SSSP). Phosphoserine is present on serine 279. Threonine 283 is subject to Phosphothreonine. Residues 326–389 (WTSQQVGQWL…KRKLKELAAA (64 aa)) form the SAM domain. Residues 375–416 (DRALVKRKLKELAAAAEKERKAQEKTARQREKLRRREHEAKK) are a coiled coil. The tract at residues 390–417 (AEKERKAQEKTARQREKLRRREHEAKKS) is disordered.

In Rattus norvegicus (Rat), this protein is Sterile alpha motif domain-containing protein 14 (Samd14).